The chain runs to 297 residues: TATA-box-binding protein (297 aa).

The disordered stretch occupies residues 52–116 (EEQQRQQQQA…ITPATPASES (65 aa)). Low complexity-rich tracts occupy residues 56–78 (RQQQ…QTPQ) and 104–114 (MTPITPATPAS). A run of 2 repeats spans residues 123 to 199 (LQNI…ARVV) and 213 to 290 (IQNM…YPIL).

This sequence belongs to the TBP family. In terms of assembly, belongs to the TFIID complex together with the TBP-associated factors (TAFs). Binds DNA as monomer. The N-terminal domain is extensively phosphorylated.

The protein localises to the nucleus. General transcription factor that functions at the core of the DNA-binding multiprotein factor TFIID. Binding of TFIID to the TATA box is the initial transcriptional step of the pre-initiation complex (PIC), playing a role in the activation of eukaryotic genes transcribed by RNA polymerase II. Members of the TBP family are differentially required to regulate transcription and development during early embryogenesis. Binds to the promoters of select genes. This chain is TATA-box-binding protein, found in Xenopus tropicalis (Western clawed frog).